A 364-amino-acid polypeptide reads, in one-letter code: 1-aminocyclopropane-1-carboxylate oxidase homolog 11 (364 aa).

The region spanning 213–312 (KSLLMICHYY…RISVASFFSS (100 aa)) is the Fe2OG dioxygenase domain. 3 residues coordinate Fe cation: His237, Asp239, and His293. Arg303 lines the 2-oxoglutarate pocket.

The protein belongs to the iron/ascorbate-dependent oxidoreductase family. Fe(2+) is required as a cofactor.

The protein is 1-aminocyclopropane-1-carboxylate oxidase homolog 11 of Arabidopsis thaliana (Mouse-ear cress).